We begin with the raw amino-acid sequence, 566 residues long: MSASTGGGGGGDSGSSSSSSSQASCGPEPSGSELAPPTPAPRMLQGLLGSDDEEQEDPKDYCKGGYYPVKIGDLFNGRYHVVRKLGWGHFSTVWLCWDIQRKRFVALKVVKSAGHYTETAVDEIKLLKCVRDSDPSDPKRETIVQLIDDFRISGVNGVHVCMVLEVLGHQLLKWIIKSNYQGLPVPCVKSIVRQVLHGLDYLHTKCKIIHTDIKPENILLCVGDAYIRRLAAEATEWQQSGAPPPSRSTVSTAPQEVLSGKLSKNKRKKMRRKRKQQKRLLEERLRDLQRLEAMEAAAQAEDSGSRLEGGSGSTSSSGCHPGGAGPGPSPASSSPAPGGDRSLSPGSQTSGFSGSLFSPASCSILSGSSNQRETGGLLSPSTPFGASNLLVNPLEPQNADKIRIKIADLGNACWVHKHFTEGIQTRQYRAVEVLIGAEYGPPADIWSTACMAFELATGDYLFEPHSGEDYSRDEDHIAHIVELLGDIPPAFALSGRYSREFFNRRGELRHIHNLKHWGLYEVLMEKYEWPLEQATQFSAFLLPMMEYIPEKRASAADCLQHPWLNP.

Residues 1 to 13 show a composition bias toward gly residues; sequence MSASTGGGGGGDS. Positions 1 to 60 are disordered; it reads MSASTGGGGGGDSGSSSSSSSQASCGPEPSGSELAPPTPAPRMLQGLLGSDDEEQEDPKD. Low complexity predominate over residues 14–26; that stretch reads GSSSSSSSQASCG. Phosphoserine is present on Ser-50. The Protein kinase domain occupies 79 to 564; the sequence is YHVVRKLGWG…AADCLQHPWL (486 aa). ATP-binding positions include 85–93 and Lys-108; that span reads LGWGHFSTV. Residue Asp-212 is the Proton acceptor of the active site. Residues 236–254 show a composition bias toward polar residues; sequence EWQQSGAPPPSRSTVSTAP. Disordered stretches follow at residues 236–283 and 295–353; these read EWQQ…LLEE and EAAA…SGFS. A compositionally biased stretch (basic residues) spans 263 to 278; it reads SKNKRKKMRRKRKQQK. At Ser-329 the chain carries Phosphoserine. The segment covering 330–339 has biased composition (low complexity); sequence PASSSPAPGG. Residues 344–353 show a composition bias toward polar residues; it reads SPGSQTSGFS.

Belongs to the protein kinase superfamily. Highly expressed in skeletal muscle, heart, uterus and parorchis. Weakly expressed in brain, stomach, small intestine and ovary.

The protein localises to the nucleus. It is found in the cytoplasm. It carries out the reaction L-seryl-[protein] + ATP = O-phospho-L-seryl-[protein] + ADP + H(+). The enzyme catalyses L-threonyl-[protein] + ATP = O-phospho-L-threonyl-[protein] + ADP + H(+). Its function is as follows. Serine/arginine-rich protein-specific kinase which specifically phosphorylates its substrates at serine residues located in regions rich in arginine/serine dipeptides, known as RS domains. Phosphorylates the SR splicing factor SRSF1 and the lamin-B receptor (LBR) in vitro. Required for normal muscle development. The protein is SRSF protein kinase 3 (SRPK3) of Sus scrofa (Pig).